A 431-amino-acid polypeptide reads, in one-letter code: MIERYSREEMSNIWTDQNRYEAWLEVEILACEAWSELGHIPKADVQKIRQNAKVNVERAQEIEQETRHDVVAFTRQVSETLGEERKWVHYGLTSTDVVDTALSFVIKQANDIIEKDLERFIDVLAEKAKNYKYTLMMGRTHGVHAEPTTFGVKMALWYTEMQRNLQRFKQVREEIEVGKMSGAVGTFANIPPEIESYVCKHLGIGTAPVSTQTLQRDRHAYYIATLALIATSLEKFAVEIRNLQKTETREVEEAFAKGQKGSSAMPHKRNPIGSENITGISRVIRGYITTAYENVPLWHERDISHSSAERIMLPDVTIALDYALNRFTNIVDRLTVFEDNMRNNIDKTFGLIFSQRVLLALINKGMVREEAYDKVQPKAMISWETKTPFRELIEQDESITSVLTKEELDECFDPKHHLNQVDTIFERAGLA.

Residues 4–5 (RY), 67–69 (RHD), and 93–94 (TS) each bind N(6)-(1,2-dicarboxyethyl)-AMP. Residue histidine 141 is the Proton donor/acceptor of the active site. N(6)-(1,2-dicarboxyethyl)-AMP is bound at residue glutamine 212. Serine 262 (proton donor/acceptor) is an active-site residue. N(6)-(1,2-dicarboxyethyl)-AMP is bound by residues serine 263, 268–270 (KRN), asparagine 276, and 307–311 (SAERI).

It belongs to the lyase 1 family. Adenylosuccinate lyase subfamily. As to quaternary structure, homodimer and homotetramer. Residues from neighboring subunits contribute catalytic and substrate-binding residues to each active site.

It carries out the reaction N(6)-(1,2-dicarboxyethyl)-AMP = fumarate + AMP. The enzyme catalyses (2S)-2-[5-amino-1-(5-phospho-beta-D-ribosyl)imidazole-4-carboxamido]succinate = 5-amino-1-(5-phospho-beta-D-ribosyl)imidazole-4-carboxamide + fumarate. Its pathway is purine metabolism; AMP biosynthesis via de novo pathway; AMP from IMP: step 2/2. It functions in the pathway purine metabolism; IMP biosynthesis via de novo pathway; 5-amino-1-(5-phospho-D-ribosyl)imidazole-4-carboxamide from 5-amino-1-(5-phospho-D-ribosyl)imidazole-4-carboxylate: step 2/2. Catalyzes two reactions in de novo purine nucleotide biosynthesis. Catalyzes the breakdown of 5-aminoimidazole- (N-succinylocarboxamide) ribotide (SAICAR or 2-[5-amino-1-(5-phospho-beta-D-ribosyl)imidazole-4-carboxamido]succinate) to 5-aminoimidazole-4-carboxamide ribotide (AICAR or 5-amino-1-(5-phospho-beta-D-ribosyl)imidazole-4-carboxamide) and fumarate, and of adenylosuccinate (ADS or N(6)-(1,2-dicarboxyethyl)-AMP) to adenosine monophosphate (AMP) and fumarate. The chain is Adenylosuccinate lyase (purB) from Staphylococcus aureus (strain USA300).